The sequence spans 48 residues: Probable antitoxin PhoAT (48 aa).

It belongs to the PhoAT antitoxin family. In terms of assembly, interacts with toxin PhoH2.

In terms of biological role, probable antitoxin component of a type II toxin-antitoxin (TA) system. The probable cognate antitoxin is PhoAT; the toxin gene can be expressed in the absence of the antitoxin gene in M.smegmatis strain mc(2)155. This chain is Probable antitoxin PhoAT, found in Mycolicibacterium smegmatis (strain ATCC 700084 / mc(2)155) (Mycobacterium smegmatis).